Reading from the N-terminus, the 122-residue chain is Large ribosomal subunit protein uL14 (122 aa).

The protein belongs to the universal ribosomal protein uL14 family. Part of the 50S ribosomal subunit. Forms a cluster with proteins L3 and L19. In the 70S ribosome, L14 and L19 interact and together make contacts with the 16S rRNA in bridges B5 and B8.

Functionally, binds to 23S rRNA. Forms part of two intersubunit bridges in the 70S ribosome. In Mycobacterium leprae (strain TN), this protein is Large ribosomal subunit protein uL14.